Consider the following 136-residue polypeptide: S-protein homolog 17 (136 aa).

Residues Met-1–Ala-22 form the signal peptide.

Belongs to the plant self-incompatibility (S1) protein family.

Its subcellular location is the secreted. This is S-protein homolog 17 from Arabidopsis thaliana (Mouse-ear cress).